The sequence spans 181 residues: Mating-type M-specific polypeptide Mc (181 aa).

The segment at residues 103–171 (TPRPPNAFIL…QHQKMYPGYK (69 aa)) is a DNA-binding region (HMG box).

The protein localises to the nucleus. It is found in the cytoplasm. Its subcellular location is the cytoskeleton. The protein resides in the microtubule organizing center. It localises to the spindle pole body. Mating type proteins are sequence specific DNA-binding proteins that act as master switches in yeast differentiation by controlling gene expression in a cell type-specific fashion. Positive regulator of MFM genes. The HMG box recognizes the DNA sequence 5'-AACAAAG-3'. Required for conjugation and efficient meiosis. This Schizosaccharomyces pombe (Fission yeast) protein is Mating-type M-specific polypeptide Mc (mat3-Mc).